The primary structure comprises 218 residues: Large ribosomal subunit protein uL4 (218 aa).

The segment at 46-102 (ARQGTHSTKTRGEVRGGGRKPFRQKGTGRARQGSIRAPHFTGGGISHGPKPRDYSQR) is disordered. A compositionally biased stretch (basic residues) spans 62 to 73 (GGRKPFRQKGTG).

Belongs to the universal ribosomal protein uL4 family. As to quaternary structure, part of the 50S ribosomal subunit.

One of the primary rRNA binding proteins, this protein initially binds near the 5'-end of the 23S rRNA. It is important during the early stages of 50S assembly. It makes multiple contacts with different domains of the 23S rRNA in the assembled 50S subunit and ribosome. In terms of biological role, forms part of the polypeptide exit tunnel. This chain is Large ribosomal subunit protein uL4, found in Corynebacterium glutamicum (strain R).